The following is a 405-amino-acid chain: Pulcherriminic acid synthase (405 aa).

Residues Lys62, Asn229, Arg285, and Cys353 each coordinate heme.

Belongs to the cytochrome P450 family. As to quaternary structure, homodimer. The cofactor is heme.

It catalyses the reaction cyclo(L-leucyl-L-leucyl) + 6 reduced [2Fe-2S]-[ferredoxin] + 3 O2 + 4 H(+) = pulcherriminic acid + 6 oxidized [2Fe-2S]-[ferredoxin] + 4 H2O. In terms of biological role, involved in the biosynthesis of pulcherrimin, a red extracellular pigment. Catalyzes the oxidation of cyclo(L-Leu-L-Leu) (cLL) to yield pulcherriminic acid which forms pulcherrimin via a nonenzymic reaction with Fe(3+). Substrates with small alkyl groups (cAA, cLG, cLP) exhibit weaker binding to CYP134A1, but substrates with larger hydrophobic side chains bind in a similar regime to cLL. This Bacillus subtilis (strain 168) protein is Pulcherriminic acid synthase (cypX).